Consider the following 242-residue polypeptide: Ribonuclease PH (242 aa).

Phosphate contacts are provided by residues Arg-87 and 125–127 (STR).

This sequence belongs to the RNase PH family. In terms of assembly, homohexameric ring arranged as a trimer of dimers.

It carries out the reaction tRNA(n+1) + phosphate = tRNA(n) + a ribonucleoside 5'-diphosphate. Functionally, phosphorolytic 3'-5' exoribonuclease that plays an important role in tRNA 3'-end maturation. Removes nucleotide residues following the 3'-CCA terminus of tRNAs; can also add nucleotides to the ends of RNA molecules by using nucleoside diphosphates as substrates, but this may not be physiologically important. Probably plays a role in initiation of 16S rRNA degradation (leading to ribosome degradation) during starvation. The sequence is that of Ribonuclease PH from Synechococcus sp. (strain JA-3-3Ab) (Cyanobacteria bacterium Yellowstone A-Prime).